Here is a 973-residue protein sequence, read N- to C-terminus: Splicing regulator ARVCF (973 aa).

Positions 95–123 are disordered; it reads VTVEEDPGTPTSHVSIVTSEDGTTRRTET. Thr103 and Thr105 each carry phosphothreonine. Residues 103–115 show a composition bias toward polar residues; it reads TPTSHVSIVTSED. Omega-N-methylarginine is present on Arg171. Disordered stretches follow at residues 233-254 and 267-331; these read RREAFPMGSESGPPSGRSLPEH and RSLA…QPER. Ser268 is modified (phosphoserine). Over residues 271–281 the composition is skewed to acidic residues; that stretch reads ADDEGGPDLEP. The span at 289–303 shows a compositional bias: basic and acidic residues; it reads RRPEYGRGLRARALE. Phosphoserine occurs at positions 333, 336, 344, and 346. 6 ARM repeats span residues 349–388, 391–430, 434–468, 469–509, 527–566, and 576–623; these read STRKEPRWRDPELPEVLAMLRHPVDPVKANAAAYLQHLCF, EGIKRRVRQLRGLPLLVALLDHPRAEVRRRACGALRNLSY, ADNKAAIRDCGGVPALVRLLRAARDNEVRELVTGT, LWNL…NEDS, LRNVSSDGAEARRRLRECEGLVDALLHALQSAVGRKDTDN, and MRNL…GKKA. A disordered region spans residues 593–623; that stretch reads YQEVEPGIPGSAATSQRRRKDDASCFGGKKA. At Ser607 the chain carries Phosphoserine. A Nuclear localization signal motif is present at residues 608–624; that stretch reads QRRRKDDASCFGGKKAK. Thr637 bears the Phosphothreonine mark. ARM repeat units follow at residues 641-681, 694-733, 734-776, and 777-821; these read PKRT…AAGA, TYIRATVRKERGLPVLVELLQSETDKVVRAVAIALRNLSL, DQRN…AVLN, and TIHE…SHVL. Positions 771-955 are required for interaction with RNA-binding proteins DDX5, HNRNPH2 and SRSF1 and with mRNAs; it reads VVAVLNTIHE…VLGPGAPPFC (185 aa). Residues 844-926 are disordered; that stretch reads FQSASTAKGP…KELLKGPGPA (83 aa). Ser865 carries the phosphoserine modification. Phosphothreonine is present on Thr866. A compositionally biased stretch (basic and acidic residues) spans 872-881; it reads KNLDGEKSTT.

Belongs to the beta-catenin family. Component of a ribonucleoprotein complex containing mRNAs and RNA-binding proteins including DDX5, HNRNPH2 and SRSF1 as well as ARVCF. Interacts (via the extreme C-terminus) with FRMPD2 (via the PDZ 2 domain). Interacts with CCDC85B. As to expression, expressed in optic nerve sheath envelope (at protein level). Expressed in heart (at protein level).

The protein resides in the cell junction. It localises to the adherens junction. Its subcellular location is the nucleus. It is found in the cytoplasm. Its function is as follows. Contributes to the regulation of alternative splicing of pre-mRNAs. In Rattus norvegicus (Rat), this protein is Splicing regulator ARVCF.